An 806-amino-acid chain; its full sequence is NADH:(hydroxy)cinnamate reductase subunit CrdB (806 aa).

Residue S257 is modified to FMN phosphoryl serine. Residues A310, E329, N337, T338, G342, G343, and D576 each contribute to the FAD site. Catalysis depends on R635, which acts as the Proton donor. FAD-binding residues include H742, E771, A786, and L787.

This sequence belongs to the FAD-dependent oxidoreductase 2 family. FRD/SDH subfamily. As to quaternary structure, NADH:(hydroxy)cinnamate reductase Crd is a heterodimer composed of CrdA and CrdB subunits, encoded by adjacent genes. FAD serves as cofactor. The cofactor is FMN. In terms of processing, is flavinylated on Ser-257 by ApbE, encoded in a neighboring gene. Covalent attachment of FMN is essential for catalytic activity.

It catalyses the reaction 3-phenylpropanoate + NAD(+) = (E)-cinnamate + NADH + H(+). The catalysed reaction is 3-(3,4-dihydroxyphenyl)propanoate + NAD(+) = (E)-caffeate + NADH + H(+). It carries out the reaction phloretate + NAD(+) = (E)-4-coumarate + NADH + H(+). The enzyme catalyses dihydroferulate + NAD(+) = (E)-ferulate + NADH + H(+). Is inactivated by molecular oxygen, allowing regulation of Crd activity by medium oxygen level. In terms of biological role, component of the NADH:(hydroxy)cinnamate reductase Crd that catalyzes the reduction of the double bond in cinnamate, p-coumarate, caffeate, and ferulate under anaerobic conditions with NADH or methyl viologen as the electron donor. Is moderately active against acrylate and practically inactive against urocanate, fumarate, methacrylate and crotonate. CrdB is the catalytic subunit that binds substrates. Is likely involved in protecting V.ruber from (hydroxy)cinnamate poisoning. The chain is NADH:(hydroxy)cinnamate reductase subunit CrdB from Vibrio ruber (strain DSM 16370 / JCM 11486 / BCRC 17186 / CECT 7878 / LMG 23124 / VR1).